Reading from the N-terminus, the 563-residue chain is MSEITLGKYLFERLKQVNVNTVFGLPGDFNLSLLDKIYEVEGMRWAGNANELNAAYAADGYARIKGMSCIITTFGVGELSALNGIAGSYAEHVGVLHVVGVPSISAQAKQLLLHHTLGNGDFTVFHRMSANISETTAMITDIATAPAEIDRCIRTTYVTQRPVYLGLPANLVDLNVPAKLLQTPIDMSLKPNDAESEKEVIDTILALVKDAKNPVILADACCSRHDVKAETKKLIDLTQFPAFVTPMGKGSIDEQHPRYGGVYVGTLSKPEVKEAVESADLILSVGALLSDFNTGSFSYSYKTKNIVEFHSDHMKIRNATFPGVQMKFVLQKLLTTIADAAKGYKPVAVPARTPANAAVPASTPLKQEWMWNQLGNFLQEGDVVIAETGTSAFGINQTTFPNNTYGISQVLWGSIGFTTGATLGAAFAAEEIDPKKRVILFIGDGSLQLTVQEISTMIRWGLKPYLFVLNNDGYTIEKLIHGPKAQYNEIQGWDHLSLLPTFGAKDYETHRVATTGEWDKLTQDKSFNDNSKIRMIEIMLPVFDAPQNLVEQAKLTAATNAKQ.

Serine 2 carries the post-translational modification N-acetylserine. Pyruvate-binding residues include aspartate 28, histidine 115, and tyrosine 157. Arginine 161 is modified (omega-N-methylarginine). Residue lysine 212 forms a Glycyl lysine isopeptide (Lys-Gly) (interchain with G-Cter in ubiquitin) linkage. Serine 223 is subject to Phosphoserine. Arginine 224 provides a ligand contact to pyruvate. Lysine 233 is covalently cross-linked (Glycyl lysine isopeptide (Lys-Gly) (interchain with G-Cter in ubiquitin)). Threonine 266 carries the phosphothreonine modification. Residues lysine 269 and lysine 332 each participate in a glycyl lysine isopeptide (Lys-Gly) (interchain with G-Cter in ubiquitin) cross-link. 2 positions are modified to phosphothreonine: threonine 336 and threonine 353. Residues threonine 390 and glycine 413 to isoleucine 415 each bind thiamine diphosphate. Mg(2+) is bound at residue aspartate 444. Residues glycine 445–serine 446 and asparagine 471–isoleucine 476 contribute to the thiamine diphosphate site. Mg(2+)-binding residues include asparagine 471 and glycine 473. Pyruvate is bound at residue glutamate 477. Residues lysine 484, lysine 505, and lysine 520 each participate in a glycyl lysine isopeptide (Lys-Gly) (interchain with G-Cter in ubiquitin) cross-link. A Phosphothreonine modification is found at threonine 522. Serine 526 is subject to Phosphoserine.

It belongs to the TPP enzyme family. As to quaternary structure, homotetramer. Requires Mg(2+) as cofactor. Thiamine diphosphate serves as cofactor. Cleavage of N-terminal methionine and N-terminal acetylation by NAT1/ARD1.

The protein localises to the cytoplasm. It localises to the nucleus. The enzyme catalyses pyruvate + H(+) = acetaldehyde + CO2. It catalyses the reaction 3-methyl-2-oxobutanoate + H(+) = 2-methylpropanal + CO2. The catalysed reaction is (S)-3-methyl-2-oxopentanoate + H(+) = 2-methylbutanal + CO2. It carries out the reaction indole-3-pyruvate + H(+) = indole-3-acetaldehyde + CO2. The enzyme catalyses 3-phenylpyruvate + H(+) = 2-phenylacetaldehyde + CO2. It catalyses the reaction 2-oxobutanoate + H(+) = propanal + CO2. The catalysed reaction is 2-oxopentanoate + H(+) = butanal + CO2. It carries out the reaction 2 acetaldehyde = acetoin. The enzyme catalyses acetaldehyde + pyruvate + H(+) = acetoin + CO2. It functions in the pathway fermentation; ethanol fermentation. It participates in amino-acid degradation; Ehrlich pathway. With respect to regulation, allosterically activated by its substrate, pyruvate. Functionally, major of three pyruvate decarboxylases (PDC1, PDC5, PDC6) implicated in the nonoxidative conversion of pyruvate to acetaldehyde and carbon dioxide during alcoholic fermentation. Most of the produced acetaldehyde is subsequently reduced to ethanol, but some is required for cytosolic acetyl-CoA production for biosynthetic pathways. The enzyme is also one of five 2-oxo acid decarboxylases (PDC1, PDC5, PDC6, ARO10, and THI3) able to decarboxylate more complex 2-oxo acids (alpha-ketoacids) than pyruvate, which seem mainly involved in amino acid catabolism. Here the enzyme catalyzes the decarboxylation of amino acids, which, in a first step, have been transaminated to the corresponding 2-oxo acids. In a third step, the resulting aldehydes are reduced to alcohols, collectively referred to as fusel oils or alcohols. Its preferred substrates are the transaminated amino acids derived from threonine (2-oxobutanoate), norvaline (2-oxopentanoate), valine (3-methyl-2-oxobutanoate, also alpha-keto-isovalerate), isoleucine ((3S)-3-methyl-2-oxopentanoate, also alpha-keto-beta-methylvalerate), phenylalanine (phenylpyruvate), and tryptophan (3-(indol-3-yl)pyruvate), whereas transaminated leucine is no substrate. In a side-reaction the carbanionic intermediate (or active aldehyde) generated by decarboxylation or by activation of an aldehyde can react with an aldehyde via condensation (or carboligation) yielding a 2-hydroxy ketone, collectively called acyloins. This is Pyruvate decarboxylase isozyme 1 from Saccharomyces cerevisiae (strain ATCC 204508 / S288c) (Baker's yeast).